Here is a 1166-residue protein sequence, read N- to C-terminus: Serine-aspartate repeat-containing protein E (1166 aa).

The first 52 residues, Met1–Ala52, serve as a signal peptide directing secretion. Positions Phe23 to Ser34 match the YSIRK-G/S signaling motif motif. Residues Ala53–Lys606 are ligand binding A region. Positions Glu54–Glu230 are disordered. Over residues Ala61–Val75 the composition is skewed to basic and acidic residues. Over residues Glu77–Asn90 the composition is skewed to low complexity. Residues Ile92–Ser108 show a composition bias toward basic and acidic residues. Residues Asn118–Gln129 are compositionally biased toward polar residues. A compositionally biased stretch (basic and acidic residues) spans Asn130 to Thr145. Residues Thr166–Glu178 show a composition bias toward low complexity. Positions Ile179–Thr212 are enriched in polar residues. The segment covering Ser221–Glu230 has biased composition (basic and acidic residues). CNA-B domains are found at residues Leu607–Pro719, Lys720–Pro829, and Lys830–Thr940. A disordered region spans residues Val904–Asn1141. 2 stretches are compositionally biased toward acidic residues: residues Thr908–Glu918 and Tyr935–Ser1105. An LPXTG sorting signal motif is present at residues Leu1129–Gly1133. Thr1132 is subject to Pentaglycyl murein peptidoglycan amidated threonine. Positions Gly1133 to Lys1166 are cleaved as a propeptide — removed by sortase.

It belongs to the serine-aspartate repeat-containing protein (SDr) family. In terms of assembly, interacts with host complement factor H/CFAH (via C-terminus). Interacts with host complement regulator C4BPA.

The protein localises to the secreted. The protein resides in the cell wall. Functionally, cell surface-associated calcium-binding protein which plays an important role in adhesion and pathogenesis. Contributes to the resistance to killing by innate immune components in blood and thus attenuates bacterial clearance by interacting with host complement factor H/CFAH and modulating its activity. Inhibits also bacterial opsonization and killing by interacting with host complement regulator C4BPA and thus inhibiting classical complement pathway activation. The protein is Serine-aspartate repeat-containing protein E (sdrE) of Staphylococcus aureus (strain Newman).